The following is a 213-amino-acid chain: MKSLQALFGGTFDPVHYGHLNPVETLANLIGLTRVTIIPNNVPPHRPQPEANSVQRKHMLELAIADKPLFTLDERELKRNAPSYTAQTLKEWRQEQGPDVPLAFIIGQDSLLTFPTWYEYETILDNAHLIVCRRPGYPLEMAQPQYQQWLEDHLTHNQEDLHLQPAGKIYLAETPWFNISATIIRERLQNGESCEDLLPEPVLTYINQQGLYR.

This sequence belongs to the NadD family.

It catalyses the reaction nicotinate beta-D-ribonucleotide + ATP + H(+) = deamido-NAD(+) + diphosphate. It participates in cofactor biosynthesis; NAD(+) biosynthesis; deamido-NAD(+) from nicotinate D-ribonucleotide: step 1/1. Its function is as follows. Catalyzes the reversible adenylation of nicotinate mononucleotide (NaMN) to nicotinic acid adenine dinucleotide (NaAD). In Shigella boydii serotype 18 (strain CDC 3083-94 / BS512), this protein is Probable nicotinate-nucleotide adenylyltransferase.